Here is a 1004-residue protein sequence, read N- to C-terminus: Protein Wnt-5 (1004 aa).

Residues 1–29 (MSCYRKRHFLLWLLRAVCMLHLTARGAYA) form the signal peptide. 4 N-linked (GlcNAc...) asparagine glycosylation sites follow: Asn-60, Asn-66, Asn-115, and Asn-219. Residues 238-298 (QKDKAKTSGA…NPGEQPIGGY (61 aa)) form a disordered region. N-linked (GlcNAc...) asparagine glycosylation is found at Asn-307 and Asn-341. The interval 310–407 (LLKPTDTDSH…ERDEWFRGQS (98 aa)) is disordered. Residues 389–403 (RREEQQRQRERDEWF) show a composition bias toward basic and acidic residues. A glycan (N-linked (GlcNAc...) asparagine) is linked at Asn-422. The interval 438 to 472 (KVSSEGSDGELLSRVERSQPSISSSSSSSSSSSRK) is disordered. A compositionally biased stretch (low complexity) spans 458–470 (SISSSSSSSSSSS). N-linked (GlcNAc...) asparagine glycans are attached at residues Asn-484, Asn-485, Asn-528, and Asn-593. Disulfide bonds link Cys-583-Cys-594, Cys-633-Cys-641, and Cys-643-Cys-661. Asn-724 is a glycosylation site (N-linked (GlcNAc...) asparagine). Positions 790 to 822 (FFKGEQQPRKKKRKNQRAAADAPAYPRNGIKES) are disordered. 8 disulfide bridges follow: Cys-862–Cys-876, Cys-864–Cys-871, Cys-933–Cys-964, Cys-949–Cys-959, Cys-963–Cys-1003, Cys-979–Cys-994, Cys-981–Cys-991, and Cys-986–Cys-987. Residue Ser-868 is the site of O-palmitoleoyl serine; by PORCN attachment. Asn-952 carries an N-linked (GlcNAc...) asparagine glycan.

It belongs to the Wnt family. In terms of assembly, interacts with porcupine (por). Post-translationally, glycosylated, glycosylation is stimulated by porcupine at the ER. Palmitoleoylated by porcupine. The lipid group functions as a sorting signal, targeting the ligand to polarized vesicles that transport Wnt5 to unique sites at the cell surface. Depalmitoleoylated by notum, leading to inhibit Wnt signaling pathway. As to expression, dynamic expression pattern during embryogenesis. Expression is seen in the limb primordia of the head and thoracic segments, mesodermal and neurogenic regions.

The protein resides in the secreted. It localises to the extracellular space. The protein localises to the extracellular matrix. Its function is as follows. Binds as a ligand to a family of frizzled seven-transmembrane receptors and acts through a cascade of genes on the nucleus. Probable developmental protein. May be a signaling molecule which affects the development of discrete regions of tissues. Is likely to signal over only few cell diameters. May have a role in limb and CNS development; may be a downstream target of Dll that acts in the specification of these primordia. The sequence is that of Protein Wnt-5 (Wnt5) from Drosophila melanogaster (Fruit fly).